Reading from the N-terminus, the 85-residue chain is Large ribosomal subunit protein bL27 (85 aa).

The disordered stretch occupies residues M1–G22.

It belongs to the bacterial ribosomal protein bL27 family.

In Photobacterium profundum (strain SS9), this protein is Large ribosomal subunit protein bL27.